The following is a 158-amino-acid chain: SsrA-binding protein (158 aa).

The protein belongs to the SmpB family.

It is found in the cytoplasm. In terms of biological role, required for rescue of stalled ribosomes mediated by trans-translation. Binds to transfer-messenger RNA (tmRNA), required for stable association of tmRNA with ribosomes. tmRNA and SmpB together mimic tRNA shape, replacing the anticodon stem-loop with SmpB. tmRNA is encoded by the ssrA gene; the 2 termini fold to resemble tRNA(Ala) and it encodes a 'tag peptide', a short internal open reading frame. During trans-translation Ala-aminoacylated tmRNA acts like a tRNA, entering the A-site of stalled ribosomes, displacing the stalled mRNA. The ribosome then switches to translate the ORF on the tmRNA; the nascent peptide is terminated with the 'tag peptide' encoded by the tmRNA and targeted for degradation. The ribosome is freed to recommence translation, which seems to be the essential function of trans-translation. This Chloroflexus aggregans (strain MD-66 / DSM 9485) protein is SsrA-binding protein.